Here is a 279-residue protein sequence, read N- to C-terminus: Putative cysteine-rich repeat secretory protein 22 (279 aa).

The N-terminal stretch at 1–31 (MSSSSASKLLGSVLVFAMISVQIVFIHCVMS) is a signal peptide. Gnk2-homologous domains follow at residues 44-146 (YLHH…PINS) and 152-276 (YEYN…LYRF).

It belongs to the cysteine-rich repeat secretory protein family.

It is found in the secreted. This is Putative cysteine-rich repeat secretory protein 22 (CRRSP22) from Arabidopsis thaliana (Mouse-ear cress).